The chain runs to 286 residues: Pantothenate synthetase (286 aa).

Residue 30–37 coordinates ATP; sequence MGNLHAGH. His37 serves as the catalytic Proton donor. Residue Gln61 participates in (R)-pantoate binding. Gln61 is a beta-alanine binding site. 149 to 152 contacts ATP; that stretch reads GQKD. Gln155 provides a ligand contact to (R)-pantoate. ATP-binding positions include Val178 and 186-189; that span reads LSSR.

It belongs to the pantothenate synthetase family. Homodimer.

Its subcellular location is the cytoplasm. The catalysed reaction is (R)-pantoate + beta-alanine + ATP = (R)-pantothenate + AMP + diphosphate + H(+). The protein operates within cofactor biosynthesis; (R)-pantothenate biosynthesis; (R)-pantothenate from (R)-pantoate and beta-alanine: step 1/1. Functionally, catalyzes the condensation of pantoate with beta-alanine in an ATP-dependent reaction via a pantoyl-adenylate intermediate. The protein is Pantothenate synthetase of Stutzerimonas stutzeri (strain A1501) (Pseudomonas stutzeri).